The sequence spans 256 residues: MSTTLTNKNVIFVAGLGGIGLDTSKELVKRDLKNLVILDRIDNPAAIAELKAINPKVTVTFYPYDVTVPITETTKLLKTIFAKVKTVDILINGAGILDDHQIERTIAVNYTGLVNTTTAILDFWDKRKGGPGGIICNIGSVTGFNAIYQVPVYSGTKAAVVNFTSSLAKLAPITGVTAYTVNPGITRTTLVHKFNSWLDVEPLVSEKLLAHPTQPSQACAENFVKAIELNKNGAIWKLDRGTLEPIQWTKHWDSGI.

12 to 35 is an NAD(+) binding site; it reads FVAGLGGIGLDTSKELVKRDLKNL. Residue Ser140 coordinates substrate. The active-site Proton acceptor is the Tyr153.

The protein belongs to the short-chain dehydrogenases/reductases (SDR) family. As to quaternary structure, homodimer.

The catalysed reaction is a primary alcohol + NAD(+) = an aldehyde + NADH + H(+). It catalyses the reaction a secondary alcohol + NAD(+) = a ketone + NADH + H(+). The protein is Alcohol dehydrogenase (Adh) of Drosophila tsacasi (Fruit fly).